The chain runs to 182 residues: MSELTTIARPYAKAVFDFAVEQSEKDKSAVEKWTNMLEFLSELIRHDKVQSYLTSTSSTFKLADTVILICGEQLDQYGQNLVRLMAENKRLAVLPAVFNEFKSYVEEYKSLSQVEVVSAQQLNDVQQQKIITAMEKRLARKVILNCRIDSSLIAGAIIRTNDFVIDGSCRGQINRLANELRL.

Belongs to the ATPase delta chain family. In terms of assembly, F-type ATPases have 2 components, F(1) - the catalytic core - and F(0) - the membrane proton channel. F(1) has five subunits: alpha(3), beta(3), gamma(1), delta(1), epsilon(1). F(0) has three main subunits: a(1), b(2) and c(10-14). The alpha and beta chains form an alternating ring which encloses part of the gamma chain. F(1) is attached to F(0) by a central stalk formed by the gamma and epsilon chains, while a peripheral stalk is formed by the delta and b chains.

It localises to the cell inner membrane. Its function is as follows. F(1)F(0) ATP synthase produces ATP from ADP in the presence of a proton or sodium gradient. F-type ATPases consist of two structural domains, F(1) containing the extramembraneous catalytic core and F(0) containing the membrane proton channel, linked together by a central stalk and a peripheral stalk. During catalysis, ATP synthesis in the catalytic domain of F(1) is coupled via a rotary mechanism of the central stalk subunits to proton translocation. This protein is part of the stalk that links CF(0) to CF(1). It either transmits conformational changes from CF(0) to CF(1) or is implicated in proton conduction. This chain is ATP synthase subunit delta, found in Histophilus somni (strain 2336) (Haemophilus somnus).